The sequence spans 386 residues: 1-deoxy-D-xylulose 5-phosphate reductoisomerase (386 aa).

Residues threonine 13, glycine 14, serine 15, isoleucine 16, asparagine 40, and asparagine 122 each coordinate NADPH. Lysine 123 lines the 1-deoxy-D-xylulose 5-phosphate pocket. NADPH is bound at residue glutamate 124. Aspartate 148 serves as a coordination point for Mn(2+). 4 residues coordinate 1-deoxy-D-xylulose 5-phosphate: serine 149, glutamate 150, serine 177, and histidine 201. Glutamate 150 contacts Mn(2+). Glycine 207 provides a ligand contact to NADPH. Residues serine 214, asparagine 219, lysine 220, and glutamate 223 each coordinate 1-deoxy-D-xylulose 5-phosphate. Mn(2+) is bound at residue glutamate 223.

This sequence belongs to the DXR family. Mg(2+) serves as cofactor. Mn(2+) is required as a cofactor.

It carries out the reaction 2-C-methyl-D-erythritol 4-phosphate + NADP(+) = 1-deoxy-D-xylulose 5-phosphate + NADPH + H(+). It functions in the pathway isoprenoid biosynthesis; isopentenyl diphosphate biosynthesis via DXP pathway; isopentenyl diphosphate from 1-deoxy-D-xylulose 5-phosphate: step 1/6. In terms of biological role, catalyzes the NADPH-dependent rearrangement and reduction of 1-deoxy-D-xylulose-5-phosphate (DXP) to 2-C-methyl-D-erythritol 4-phosphate (MEP). This is 1-deoxy-D-xylulose 5-phosphate reductoisomerase from Francisella tularensis subsp. holarctica (strain OSU18).